The following is a 355-amino-acid chain: UDP-N-acetylglucosamine--N-acetylmuramyl-(pentapeptide) pyrophosphoryl-undecaprenol N-acetylglucosamine transferase (355 aa).

UDP-N-acetyl-alpha-D-glucosamine is bound by residues 15-17, Asn-127, Arg-163, Ser-191, Ile-244, 263-268, and Gln-288; these read TGG and ALTVSE.

The protein belongs to the glycosyltransferase 28 family. MurG subfamily.

The protein localises to the cell inner membrane. The catalysed reaction is di-trans,octa-cis-undecaprenyl diphospho-N-acetyl-alpha-D-muramoyl-L-alanyl-D-glutamyl-meso-2,6-diaminopimeloyl-D-alanyl-D-alanine + UDP-N-acetyl-alpha-D-glucosamine = di-trans,octa-cis-undecaprenyl diphospho-[N-acetyl-alpha-D-glucosaminyl-(1-&gt;4)]-N-acetyl-alpha-D-muramoyl-L-alanyl-D-glutamyl-meso-2,6-diaminopimeloyl-D-alanyl-D-alanine + UDP + H(+). Its pathway is cell wall biogenesis; peptidoglycan biosynthesis. Functionally, cell wall formation. Catalyzes the transfer of a GlcNAc subunit on undecaprenyl-pyrophosphoryl-MurNAc-pentapeptide (lipid intermediate I) to form undecaprenyl-pyrophosphoryl-MurNAc-(pentapeptide)GlcNAc (lipid intermediate II). This is UDP-N-acetylglucosamine--N-acetylmuramyl-(pentapeptide) pyrophosphoryl-undecaprenol N-acetylglucosamine transferase from Salmonella gallinarum (strain 287/91 / NCTC 13346).